Consider the following 656-residue polypeptide: Squalene-hopene cyclase (656 aa).

One copy of the PFTB 1 repeat lies at 68-110; it reads EQKIANYLRRCQSREHWGWPVYYGGEFNISASVQAYFALKMTG. Catalysis depends on Asp396, which acts as the Proton donor. 4 PFTB repeats span residues 417–459, 485–525, 533–582, and 591–634; these read LDRA…ALLD, IERG…NASG, VLKC…GLMA, and VKRG…QFFP.

The protein belongs to the terpene cyclase/mutase family.

The enzyme catalyses squalene = hop-22(29)-ene. The catalysed reaction is squalene + H2O = hopan-22-ol. In terms of biological role, squalene cyclase that catalyzes the oxygen-independent cyclization of squalene into hopanoids, a class of cyclic triterpenoids including hop-22(29)-ene, hop-17(21)-ene, hop-21(22)-ene, and hopan-22-ol. The chain is Squalene-hopene cyclase from Schizosaccharomyces japonicus (strain yFS275 / FY16936) (Fission yeast).